We begin with the raw amino-acid sequence, 463 residues long: O-phospho-L-seryl-tRNA:Cys-tRNA synthase 2 (463 aa).

Pyridoxal 5'-phosphate is bound by residues 154–155, Asn-259, and 282–284; these read AR and SGH. N6-(pyridoxal phosphate)lysine is present on Lys-285.

The protein belongs to the SepCysS family. In terms of assembly, homodimer. Interacts with SepRS. Requires pyridoxal 5'-phosphate as cofactor.

The catalysed reaction is O-phospho-L-seryl-tRNA(Cys) + hydrogen sulfide + H(+) = L-cysteinyl-tRNA(Cys) + phosphate. Functionally, converts O-phospho-L-seryl-tRNA(Cys) (Sep-tRNA(Cys)) to L-cysteinyl-tRNA(Cys) (Cys-tRNA(Cys)). The polypeptide is O-phospho-L-seryl-tRNA:Cys-tRNA synthase 2 (Methanocella arvoryzae (strain DSM 22066 / NBRC 105507 / MRE50)).